A 477-amino-acid polypeptide reads, in one-letter code: Glycogen synthase (477 aa).

Position 15 (lysine 15) interacts with ADP-alpha-D-glucose.

Belongs to the glycosyltransferase 1 family. Bacterial/plant glycogen synthase subfamily.

It carries out the reaction [(1-&gt;4)-alpha-D-glucosyl](n) + ADP-alpha-D-glucose = [(1-&gt;4)-alpha-D-glucosyl](n+1) + ADP + H(+). It functions in the pathway glycan biosynthesis; glycogen biosynthesis. Synthesizes alpha-1,4-glucan chains using ADP-glucose. This Klebsiella pneumoniae (strain 342) protein is Glycogen synthase.